The sequence spans 153 residues: Virion assembly protein OPG100 (153 aa).

This sequence belongs to the orthopoxvirus OPG100 family. In terms of assembly, homodimer. Part of a complex composed of the kinase OPG054, OPG092, OPG114, OPG115, OPG142 and OPG157. Interacts with OPG175.

It localises to the virion. Its subcellular location is the host cytoplasm. In terms of biological role, late protein which is a part of a large complex required for early virion morphogenesis. This complex participates in the formation of virosomes and the incorporation of virosomal contents into nascent immature virions. Plays a role in DNA packaging during immature virions (IV) formation. The chain is Virion assembly protein OPG100 (OPG100) from Vaccinia virus (strain Western Reserve) (VACV).